Consider the following 527-residue polypeptide: GMP synthase [glutamine-hydrolyzing] (527 aa).

A Glutamine amidotransferase type-1 domain is found at 4 to 202 (KILILDFGSQ…VLKICGAQPD (199 aa)). Cysteine 81 acts as the Nucleophile in catalysis. Catalysis depends on residues histidine 176 and glutamate 178. Residues 203 to 395 (WEMGHYIDEA…LGLPPAMVYR (193 aa)) form the GMPS ATP-PPase domain. 230 to 236 (SGGVDSS) serves as a coordination point for ATP.

As to quaternary structure, homodimer.

The enzyme catalyses XMP + L-glutamine + ATP + H2O = GMP + L-glutamate + AMP + diphosphate + 2 H(+). Its pathway is purine metabolism; GMP biosynthesis; GMP from XMP (L-Gln route): step 1/1. Catalyzes the synthesis of GMP from XMP. In Paraburkholderia xenovorans (strain LB400), this protein is GMP synthase [glutamine-hydrolyzing].